We begin with the raw amino-acid sequence, 227 residues long: Cytidylate kinase (227 aa).

Position 12–20 (12–20) interacts with ATP; the sequence is GPSGAGKGT.

It belongs to the cytidylate kinase family. Type 1 subfamily.

The protein resides in the cytoplasm. The catalysed reaction is CMP + ATP = CDP + ADP. It carries out the reaction dCMP + ATP = dCDP + ADP. The polypeptide is Cytidylate kinase (Marinomonas sp. (strain MWYL1)).